Consider the following 2073-residue polypeptide: Dedicator of cytokinesis protein 11 (2073 aa).

Residue Ser-12 is modified to Phosphoserine. Thr-16 carries the phosphothreonine modification. Phosphoserine occurs at positions 23 and 161. The 108-residue stretch at 165–272 (GVIKQGWLHK…WLITLKKIIQ (108 aa)) folds into the PH domain. Tyr-248 bears the Phosphotyrosine mark. Ser-306, Ser-440, and Ser-445 each carry phosphoserine. Residues 640 to 818 (KNHLYVYPLQ…PLLKIKSHLE (179 aa)) form the C2 DOCK-type domain. A disordered region spans residues 1226-1267 (FQNGHGIKREDSRGSLIPEGATGFPDQGNTGENTRQSSTRSS). 2 positions are modified to phosphoserine: Ser-1237 and Ser-1240. One can recognise a DOCKER domain in the interval 1609–2036 (KSYASTPELR…LSDIIHEQIL (428 aa)).

The protein belongs to the DOCK family. In terms of assembly, interacts with CDC42.

In terms of biological role, guanine nucleotide-exchange factor (GEF) that activates CDC42 by exchanging bound GDP for free GTP. Required for marginal zone (MZ) B-cell development, is associated with early bone marrow B-cell development, MZ B-cell formation, MZ B-cell number and marginal metallophilic macrophages morphology. Facilitates filopodia formation through the activation of CDC42. This Homo sapiens (Human) protein is Dedicator of cytokinesis protein 11.